Consider the following 350-residue polypeptide: Biotin synthase (350 aa).

One can recognise a Radical SAM core domain in the interval 41–265; it reads NEVQISRLLS…VMPLSRVRLS (225 aa). [4Fe-4S] cluster is bound by residues Cys-56, Cys-60, and Cys-63. 4 residues coordinate [2Fe-2S] cluster: Cys-100, Cys-131, Cys-191, and Arg-263.

Belongs to the radical SAM superfamily. Biotin synthase family. Homodimer. [4Fe-4S] cluster is required as a cofactor. Requires [2Fe-2S] cluster as cofactor.

The enzyme catalyses (4R,5S)-dethiobiotin + (sulfur carrier)-SH + 2 reduced [2Fe-2S]-[ferredoxin] + 2 S-adenosyl-L-methionine = (sulfur carrier)-H + biotin + 2 5'-deoxyadenosine + 2 L-methionine + 2 oxidized [2Fe-2S]-[ferredoxin]. The protein operates within cofactor biosynthesis; biotin biosynthesis; biotin from 7,8-diaminononanoate: step 2/2. In terms of biological role, catalyzes the conversion of dethiobiotin (DTB) to biotin by the insertion of a sulfur atom into dethiobiotin via a radical-based mechanism. The polypeptide is Biotin synthase (Shewanella loihica (strain ATCC BAA-1088 / PV-4)).